The sequence spans 352 residues: B1 bradykinin receptor (352 aa).

Residues methionine 1–threonine 41 are Extracellular-facing. N-linked (GlcNAc...) asparagine glycosylation is found at asparagine 13 and asparagine 21. A helical membrane pass occupies residues phenylalanine 42 to leucine 62. Topologically, residues leucine 63–glutamate 72 are cytoplasmic. A helical membrane pass occupies residues isoleucine 73–alanine 93. The Extracellular segment spans residues glutamate 94–arginine 110. Cysteine 109 and cysteine 188 are joined by a disulfide. The helical transmembrane segment at valine 111–serine 131 threads the bilayer. Over glutamine 132–alanine 153 the chain is Cytoplasmic. A helical membrane pass occupies residues arginine 154–leucine 174. The Extracellular portion of the chain corresponds to arginine 175–asparagine 206. Asparagine 184 carries N-linked (GlcNAc...) asparagine glycosylation. Residues isoleucine 207–serine 227 form a helical membrane-spanning segment. Topologically, residues leucine 228 to leucine 250 are cytoplasmic. A helical membrane pass occupies residues isoleucine 251–leucine 271. Residues glutamate 272–glutamine 294 are Extracellular-facing. The helical transmembrane segment at leucine 295–glycine 315 threads the bilayer. Residues arginine 316–asparagine 352 are Cytoplasmic-facing. The S-palmitoyl cysteine moiety is linked to residue cysteine 329.

The protein belongs to the G-protein coupled receptor 1 family. Bradykinin receptor subfamily. BDKRB1 sub-subfamily.

The protein resides in the cell membrane. Functionally, this is a receptor for bradykinin. Could be a factor in chronic pain and inflammation. In Macaca fascicularis (Crab-eating macaque), this protein is B1 bradykinin receptor (BDKRB1).